A 156-amino-acid polypeptide reads, in one-letter code: MPLDQSFIGREYPPTPAYEVGREKIREFAEAIKDRSPLHRDPEAAKAAGYPDVIAPPTFAVLLSMKAHDAIVEDPQLGLDYSRVVHGQQEFAHHRPIQAGDRLRTVVHVDDIKARAGNDFLTVRAEITTVEGEPVCTAKSTLVARGTAEDPEGEDA.

The 121-residue stretch at 8–128 folds into the MaoC-like domain; it reads IGREYPPTPA…DFLTVRAEIT (121 aa).

The protein belongs to the UPF0336 family.

The chain is UPF0336 protein SACE_6876 from Saccharopolyspora erythraea (strain ATCC 11635 / DSM 40517 / JCM 4748 / NBRC 13426 / NCIMB 8594 / NRRL 2338).